The following is a 376-amino-acid chain: Succinyl-diaminopimelate desuccinylase (376 aa).

Position 66 (histidine 66) interacts with Zn(2+). The active site involves aspartate 68. Aspartate 99 is a Zn(2+) binding site. Catalysis depends on glutamate 133, which acts as the Proton acceptor. The Zn(2+) site is built by glutamate 134, glutamate 162, and histidine 349.

The protein belongs to the peptidase M20A family. DapE subfamily. Homodimer. Requires Zn(2+) as cofactor. The cofactor is Co(2+).

It catalyses the reaction N-succinyl-(2S,6S)-2,6-diaminopimelate + H2O = (2S,6S)-2,6-diaminopimelate + succinate. It participates in amino-acid biosynthesis; L-lysine biosynthesis via DAP pathway; LL-2,6-diaminopimelate from (S)-tetrahydrodipicolinate (succinylase route): step 3/3. Catalyzes the hydrolysis of N-succinyl-L,L-diaminopimelic acid (SDAP), forming succinate and LL-2,6-diaminopimelate (DAP), an intermediate involved in the bacterial biosynthesis of lysine and meso-diaminopimelic acid, an essential component of bacterial cell walls. The protein is Succinyl-diaminopimelate desuccinylase of Vesicomyosocius okutanii subsp. Calyptogena okutanii (strain HA).